Here is a 626-residue protein sequence, read N- to C-terminus: Trehalase (626 aa).

An N-terminal signal peptide occupies residues 1 to 35 (MASSCSIRCGSRNILVNAAATFLALLVVLRCFANA). Over 36-595 (EKPSPCQSDV…STPQPVVVST (560 aa)) the chain is Extracellular. Residue Asn104 is glycosylated (N-linked (GlcNAc...) asparagine). Residues Arg181, 188–189 (WD), Asn225, and 234–236 (RSQ) each bind substrate. Residue Asn274 is glycosylated (N-linked (GlcNAc...) asparagine). Residues 299 to 301 (RPE) and Gly333 each bind substrate. Residue Asp335 is the Proton donor/acceptor of the active site. N-linked (GlcNAc...) asparagine glycans are attached at residues Asn350, Asn384, Asn498, and Asn525. Residue Glu532 is the Proton donor/acceptor of the active site. Glu547 is a binding site for substrate. Residues 596 to 616 (AGQVMTGILALVISLAAGFIG) form a helical membrane-spanning segment. Over 617–626 (KMRCANNAAQ) the chain is Cytoplasmic.

It belongs to the glycosyl hydrolase 37 family. Monomer. Glycosylated; contains 3.1% carbohydrates.

The protein localises to the membrane. The enzyme catalyses alpha,alpha-trehalose + H2O = alpha-D-glucose + beta-D-glucose. With respect to regulation, inhibited by sodium, potassium and ammonium ions, and by TEMED. The chain is Trehalase from Apis mellifera (Honeybee).